We begin with the raw amino-acid sequence, 250 residues long: tRNA (guanine-N(1)-)-methyltransferase (250 aa).

Residues Gly-116 and 136–141 contribute to the S-adenosyl-L-methionine site; that span reads IGDYVL.

Belongs to the RNA methyltransferase TrmD family. Homodimer.

It is found in the cytoplasm. It carries out the reaction guanosine(37) in tRNA + S-adenosyl-L-methionine = N(1)-methylguanosine(37) in tRNA + S-adenosyl-L-homocysteine + H(+). In terms of biological role, specifically methylates guanosine-37 in various tRNAs. The chain is tRNA (guanine-N(1)-)-methyltransferase from Pseudomonas entomophila (strain L48).